The chain runs to 27 residues: NLAQFGFMIRCANGGSRSALDYADYGC.

The protein belongs to the phospholipase A2 family. Group I subfamily. As to quaternary structure, heterotrimer composed of an alpha-neurotoxin-like peptide of 8 kDa (AC P0CJ35), this neurotoxic phospholipase of 16 kDa and a serine protease inhibitor of 7 kDa (AC B7S4N9) at an approximate stoichiometry of 1:1:4; non-covalently linked. Ca(2+) serves as cofactor. Post-translationally, contains 7 disulfide bonds. As to expression, expressed by the venom gland.

The protein localises to the secreted. It catalyses the reaction a 1,2-diacyl-sn-glycero-3-phosphocholine + H2O = a 1-acyl-sn-glycero-3-phosphocholine + a fatty acid + H(+). In terms of biological role, heterotrimer: blocks the voltage-dependent L-type calcium channels from the heart, and the small conductance calcium-activated potassium channels in the chromaffin cells and in the brain. Is very toxic to mice. Its function is as follows. Monomer: Snake venom phospholipase A2 (PLA2) that has neurotoxic activities. Voltage-dependently affects ionic currents in chick (Gallus domesticus) dorsal root ganglion cells. PLA2 catalyzes the calcium-dependent hydrolysis of the 2-acyl groups in 3-sn-phosphoglycerides. In Oxyuranus scutellatus scutellatus (Australian taipan), this protein is Phospholipase A2 taicatoxin.